A 91-amino-acid chain; its full sequence is Small ribosomal subunit protein uS19m (91 aa).

The protein belongs to the universal ribosomal protein uS19 family. Component of the mitochondrial small ribosomal subunit (mt-SSU). Mature N.crassa 74S mitochondrial ribosomes consist of a small (37S) and a large (54S) subunit. The 37S small subunit contains a 16S ribosomal RNA (16S mt-rRNA) and 32 different proteins. The 54S large subunit contains a 23S rRNA (23S mt-rRNA) and 42 different proteins.

The protein resides in the mitochondrion. Functionally, component of the mitochondrial ribosome (mitoribosome), a dedicated translation machinery responsible for the synthesis of mitochondrial genome-encoded proteins, including at least some of the essential transmembrane subunits of the mitochondrial respiratory chain. The mitoribosomes are attached to the mitochondrial inner membrane and translation products are cotranslationally integrated into the membrane. This is Small ribosomal subunit protein uS19m (rsm19) from Neurospora crassa (strain ATCC 24698 / 74-OR23-1A / CBS 708.71 / DSM 1257 / FGSC 987).